The primary structure comprises 57 residues: MAVPFRRTSKAKKRKRRTHVKLQLPGMNECSNCGEYRLSHHVCPECGQYDGKEVANS.

Belongs to the bacterial ribosomal protein bL32 family.

In Listeria welshimeri serovar 6b (strain ATCC 35897 / DSM 20650 / CCUG 15529 / CIP 8149 / NCTC 11857 / SLCC 5334 / V8), this protein is Large ribosomal subunit protein bL32B.